Reading from the N-terminus, the 283-residue chain is Acetylglutamate kinase (283 aa).

Substrate contacts are provided by residues 64-65, Arg-86, and Asn-178; that span reads GG.

It belongs to the acetylglutamate kinase family. ArgB subfamily.

Its subcellular location is the cytoplasm. It carries out the reaction N-acetyl-L-glutamate + ATP = N-acetyl-L-glutamyl 5-phosphate + ADP. The protein operates within amino-acid biosynthesis; L-arginine biosynthesis; N(2)-acetyl-L-ornithine from L-glutamate: step 2/4. Functionally, catalyzes the ATP-dependent phosphorylation of N-acetyl-L-glutamate. The sequence is that of Acetylglutamate kinase from Lactococcus lactis subsp. lactis (strain IL1403) (Streptococcus lactis).